Reading from the N-terminus, the 121-residue chain is Small ribosomal subunit protein uS10 (121 aa).

A disordered region spans residues 1 to 20 (MTEQKAKSSKTSSEEAKKQK).

The protein belongs to the universal ribosomal protein uS10 family. In terms of assembly, part of the 30S ribosomal subunit.

Functionally, involved in the binding of tRNA to the ribosomes. The chain is Small ribosomal subunit protein uS10 from Mycoplasmoides gallisepticum (strain R(low / passage 15 / clone 2)) (Mycoplasma gallisepticum).